Consider the following 203-residue polypeptide: Casparian strip membrane protein 1 (203 aa).

Ala-2 carries the post-translational modification N-acetylalanine. Over Ala-2 to Arg-40 the chain is Cytoplasmic. Residues Gly-41–Ala-61 traverse the membrane as a helical segment. Topologically, residues Ser-62 to Tyr-92 are extracellular. The chain crosses the membrane as a helical span at residues Phe-93–Val-113. The Cytoplasmic segment spans residues Thr-114–Arg-124. Residues Leu-125–Ala-145 traverse the membrane as a helical segment. Over Ala-146–Thr-177 the chain is Extracellular. Asn-156 and Asn-174 each carry an N-linked (GlcNAc...) asparagine glycan. A helical transmembrane segment spans residues Ala-178–Ile-198. Residues Ala-199–His-203 are Cytoplasmic-facing.

The protein belongs to the Casparian strip membrane proteins (CASP) family. Homodimer and heterodimers.

Its subcellular location is the cell membrane. In terms of biological role, regulates membrane-cell wall junctions and localized cell wall deposition. Required for establishment of the Casparian strip membrane domain (CSD) and the subsequent formation of Casparian strips, a cell wall modification of the root endodermis that determines an apoplastic barrier between the intraorganismal apoplasm and the extraorganismal apoplasm and prevents lateral diffusion. The chain is Casparian strip membrane protein 1 from Arabidopsis lyrata subsp. lyrata (Lyre-leaved rock-cress).